The sequence spans 96 residues: UPF0729 protein AGAP000931 (96 aa).

The disordered stretch occupies residues 65–96; sequence VPPGHDPVGPTVAADTATSDAVDDAASSKKTL. Positions 75–96 are enriched in low complexity; that stretch reads TVAADTATSDAVDDAASSKKTL.

Belongs to the UPF0729 family.

The polypeptide is UPF0729 protein AGAP000931 (Anopheles gambiae (African malaria mosquito)).